The primary structure comprises 206 residues: Small ribosomal subunit protein uS4 (206 aa).

One can recognise an S4 RNA-binding domain in the interval 96-156 (SRLDNVVYRM…EKSKKQLRIQ (61 aa)).

This sequence belongs to the universal ribosomal protein uS4 family. In terms of assembly, part of the 30S ribosomal subunit. Contacts protein S5. The interaction surface between S4 and S5 is involved in control of translational fidelity.

One of the primary rRNA binding proteins, it binds directly to 16S rRNA where it nucleates assembly of the body of the 30S subunit. In terms of biological role, with S5 and S12 plays an important role in translational accuracy. The chain is Small ribosomal subunit protein uS4 from Francisella philomiragia subsp. philomiragia (strain ATCC 25017 / CCUG 19701 / FSC 153 / O#319-036).